A 493-amino-acid chain; its full sequence is Glutamate--tRNA ligase (493 aa).

The 'HIGH' region motif lies at 10–20 (PSPTGDPHVGT). The short motif at 251–255 (KLSKR) is the 'KMSKS' region element. Lysine 254 is an ATP binding site.

Belongs to the class-I aminoacyl-tRNA synthetase family. Glutamate--tRNA ligase type 1 subfamily. Monomer.

It localises to the cytoplasm. The catalysed reaction is tRNA(Glu) + L-glutamate + ATP = L-glutamyl-tRNA(Glu) + AMP + diphosphate. Its function is as follows. Catalyzes the attachment of glutamate to tRNA(Glu) in a two-step reaction: glutamate is first activated by ATP to form Glu-AMP and then transferred to the acceptor end of tRNA(Glu). The chain is Glutamate--tRNA ligase from Pseudomonas putida (strain W619).